A 221-amino-acid polypeptide reads, in one-letter code: Secreted protein BARF1 (221 aa).

An N-terminal signal peptide occupies residues 1-20 (MARFIAQLLLLASCVAAGQA). 2 Ig-like domains span residues 21–120 (VTAF…EHLS) and 124–220 (PLTL…GYLS). N-linked (GlcNAc...) asparagine; by host glycosylation is present at N95. C146 and C201 are disulfide-bonded.

As to quaternary structure, homohexamer. Interacts with human CSF1. Post-translationally, phosphorylated on serine and threonine by host.

The protein localises to the secreted. Plays diverse functions in immunomodulation and oncogenicity, maybe by acting as a functional receptor for human CSF1. May inhibit interferon secretion from mononuclear cells. Exhibits oncogenic activity in vitro. The sequence is that of Secreted protein BARF1 from Epstein-Barr virus (strain B95-8) (HHV-4).